The primary structure comprises 493 residues: Transmembrane and coiled-coil domain-containing protein 6 (493 aa).

Positions 15 to 84 (GVEELRRRRR…QRGTEEKERE (70 aa)) form a coiled coil. The next 2 helical transmembrane spans lie at 338 to 358 (VVAALFILLQFFFQKQPSLLP) and 386 to 406 (PLLQLLPVSNVVSVMVLTVLC).

It localises to the membrane. The polypeptide is Transmembrane and coiled-coil domain-containing protein 6 (TMCO6) (Homo sapiens (Human)).